The following is a 170-amino-acid chain: Arginine repressor (170 aa).

Belongs to the ArgR family.

Its subcellular location is the cytoplasm. It functions in the pathway amino-acid biosynthesis; L-arginine biosynthesis [regulation]. Its function is as follows. Regulates arginine biosynthesis genes. The polypeptide is Arginine repressor (Bifidobacterium longum (strain NCC 2705)).